The chain runs to 288 residues: Ribosomal RNA small subunit methyltransferase A (288 aa).

6 residues coordinate S-adenosyl-L-methionine: Asn-28, Leu-30, Gly-55, Glu-77, Asp-103, and Asn-123.

This sequence belongs to the class I-like SAM-binding methyltransferase superfamily. rRNA adenine N(6)-methyltransferase family. RsmA subfamily.

The protein resides in the cytoplasm. The catalysed reaction is adenosine(1518)/adenosine(1519) in 16S rRNA + 4 S-adenosyl-L-methionine = N(6)-dimethyladenosine(1518)/N(6)-dimethyladenosine(1519) in 16S rRNA + 4 S-adenosyl-L-homocysteine + 4 H(+). Its function is as follows. Specifically dimethylates two adjacent adenosines (A1518 and A1519) in the loop of a conserved hairpin near the 3'-end of 16S rRNA in the 30S particle. May play a critical role in biogenesis of 30S subunits. The polypeptide is Ribosomal RNA small subunit methyltransferase A (Xanthobacter autotrophicus (strain ATCC BAA-1158 / Py2)).